We begin with the raw amino-acid sequence, 101 residues long: NAD(P)H-quinone oxidoreductase subunit 4L, chloroplastic (101 aa).

The next 3 membrane-spanning stretches (helical) occupy residues 2–22, 32–52, and 61–81; these read MLEH…YGLI, MCLE…SDFF, and IFSI…PAIV.

This sequence belongs to the complex I subunit 4L family. NDH is composed of at least 16 different subunits, 5 of which are encoded in the nucleus.

The protein localises to the plastid. It localises to the chloroplast thylakoid membrane. It catalyses the reaction a plastoquinone + NADH + (n+1) H(+)(in) = a plastoquinol + NAD(+) + n H(+)(out). The catalysed reaction is a plastoquinone + NADPH + (n+1) H(+)(in) = a plastoquinol + NADP(+) + n H(+)(out). Its function is as follows. NDH shuttles electrons from NAD(P)H:plastoquinone, via FMN and iron-sulfur (Fe-S) centers, to quinones in the photosynthetic chain and possibly in a chloroplast respiratory chain. The immediate electron acceptor for the enzyme in this species is believed to be plastoquinone. Couples the redox reaction to proton translocation, and thus conserves the redox energy in a proton gradient. This Lotus japonicus (Lotus corniculatus var. japonicus) protein is NAD(P)H-quinone oxidoreductase subunit 4L, chloroplastic.